The sequence spans 494 residues: Probable malate:quinone oxidoreductase 3 (494 aa).

This sequence belongs to the MQO family. It depends on FAD as a cofactor.

It carries out the reaction (S)-malate + a quinone = a quinol + oxaloacetate. Its pathway is carbohydrate metabolism; tricarboxylic acid cycle; oxaloacetate from (S)-malate (quinone route): step 1/1. This Staphylococcus epidermidis (strain ATCC 35984 / DSM 28319 / BCRC 17069 / CCUG 31568 / BM 3577 / RP62A) protein is Probable malate:quinone oxidoreductase 3.